The sequence spans 432 residues: MSKAFSAPGKAFLAGGYLVLEPIYDAYVTALSSRMHAVITPKGTSLKESRIKISSPQFANGEWEYHISSNTEKPKEVQSRINPFLEATIFIVLAYIQPTEAFDLEIIIYSDPGYHSQEDTETKTSSNGEKTFLYHSRAITEVEKTGLGSSAGLVSVVATSLLSHFIPNVISTNKDILHNVAQIAHCYAQKKIGSGFDVATAIYGSIVYRRFQPALINDVFQVLESDPEKFPTELKKLIASNWEFKHERCTLPHGIKLLMGDVKGGSETPKLVSRVLQWKKEKPEESSVVYDQLNSANLQFMKELREMREKYDSDPETYIKELDHSIEPLTVAIKNIRKGLQALTQKSEVPIEPDVQTQLLDRCQEIPGCVGGVVPGAGGYDAIAVLVLENQVGNFKQKTLENPDYFHNVYWVDLEEQTEGVLEEKPEDYIGL.

Residues Lys10 and 142-148 (VEKTGLG) each bind ATP.

It belongs to the GHMP kinase family. Mevalonate kinase subfamily.

Its subcellular location is the cytoplasm. It catalyses the reaction (R)-5-phosphomevalonate + ATP = (R)-5-diphosphomevalonate + ADP. The protein operates within isoprenoid biosynthesis; isopentenyl diphosphate biosynthesis via mevalonate pathway; isopentenyl diphosphate from (R)-mevalonate: step 2/3. In terms of biological role, phosphomevalonate kinase; part of the second module of ergosterol biosynthesis pathway that includes the middle steps of the pathway. ERG8 converts 5-phosphomevalonate to 5-diphosphomevalonate. The second module is carried out in the vacuole and involves the formation of farnesyl diphosphate, which is also an important intermediate in the biosynthesis of ubiquinone, dolichol, heme and prenylated proteins. Activity by the mevalonate kinase ERG12 first converts mevalonate into 5-phosphomevalonate. 5-phosphomevalonate is then further converted to 5-diphosphomevalonate by the phosphomevalonate kinase ERG8. The diphosphomevalonate decarboxylase MVD then produces isopentenyl diphosphate. The isopentenyl-diphosphate delta-isomerase IDI1 then catalyzes the 1,3-allylic rearrangement of the homoallylic substrate isopentenyl (IPP) to its highly electrophilic allylic isomer, dimethylallyl diphosphate (DMAPP). Finally the farnesyl diphosphate synthase ERG20 catalyzes the sequential condensation of isopentenyl pyrophosphate with dimethylallyl pyrophosphate, and then with the resultant geranylpyrophosphate to the ultimate product farnesyl pyrophosphate. This is Phosphomevalonate kinase from Candida albicans (strain SC5314 / ATCC MYA-2876) (Yeast).